A 421-amino-acid polypeptide reads, in one-letter code: 3-oxoacyl-[acyl-carrier-protein] synthase 2 (421 aa).

The 417-residue stretch at 1 to 417 (MRRVVITGTG…GTNASLILRR (417 aa)) folds into the Ketosynthase family 3 (KS3) domain. Residues Cys-170, His-311, and His-347 each act as for beta-ketoacyl synthase activity in the active site.

Belongs to the thiolase-like superfamily. Beta-ketoacyl-ACP synthases family. Homodimer.

It catalyses the reaction a fatty acyl-[ACP] + malonyl-[ACP] + H(+) = a 3-oxoacyl-[ACP] + holo-[ACP] + CO2. The enzyme catalyses (9Z)-hexadecenoyl-[ACP] + malonyl-[ACP] + H(+) = 3-oxo-(11Z)-octadecenoyl-[ACP] + holo-[ACP] + CO2. It functions in the pathway lipid metabolism; fatty acid biosynthesis. Involved in the type II fatty acid elongation cycle. Catalyzes the elongation of a wide range of acyl-ACP by the addition of two carbons from malonyl-ACP to an acyl acceptor. Can efficiently catalyze the conversion of palmitoleoyl-ACP (cis-hexadec-9-enoyl-ACP) to cis-vaccenoyl-ACP (cis-octadec-11-enoyl-ACP), an essential step in the thermal regulation of fatty acid composition. This chain is 3-oxoacyl-[acyl-carrier-protein] synthase 2 (fabF), found in Rhizobium meliloti (strain 1021) (Ensifer meliloti).